We begin with the raw amino-acid sequence, 345 residues long: Adenine deaminase (345 aa).

Zn(2+) contacts are provided by H24, H26, and H204. The active-site Proton donor is E207. D285 lines the Zn(2+) pocket. D286 contacts substrate.

Belongs to the metallo-dependent hydrolases superfamily. Adenosine and AMP deaminases family. Adenine deaminase type 2 subfamily. Zn(2+) is required as a cofactor.

The catalysed reaction is adenine + H2O + H(+) = hypoxanthine + NH4(+). Its function is as follows. Catalyzes the hydrolytic deamination of adenine to hypoxanthine. Plays an important role in the purine salvage pathway and in nitrogen catabolism. This chain is Adenine deaminase, found in Albidiferax ferrireducens (strain ATCC BAA-621 / DSM 15236 / T118) (Rhodoferax ferrireducens).